The chain runs to 493 residues: Transcript termination protein OPG145 (493 aa).

The Helicase ATP-binding domain occupies 100–256 (MIESKRPLYI…NSIINIAKLS (157 aa)). ATP is bound at residue 113-120 (LACGFGKT). Positions 206 to 209 (DESH) match the DESH box motif. The Helicase C-terminal domain maps to 309–456 (ILDTLVEEFK…IISLSVDKLG (148 aa)).

This sequence belongs to the helicase family. Poxviruses subfamily. In terms of assembly, interacts with OPG087. Might be part of a transcription complex composed at least of OPG087, OPG110, and OPG145.

It is found in the virion. Its function is as follows. DNA helicase which seems to act as a postreplicative transcription termination factor. Involved in ATP-dependent release of nascent RNA. Forms a stable complex with single-stranded DNA, and to a lesser extent RNA. The chain is Transcript termination protein OPG145 (OPG145) from Homo sapiens (Human).